We begin with the raw amino-acid sequence, 592 residues long: 3-hydroxy-3-methylglutaryl-coenzyme A reductase 1 (592 aa).

The disordered stretch occupies residues 1–45; the sequence is MDLRRRPPKPPVTNNNNSNGSFRSYQPRTSDDDHRRRATTIAPPP. The span at 12–28 shows a compositional bias: polar residues; that stretch reads VTNNNNSNGSFRSYQPR. N-linked (GlcNAc...) asparagine glycans are attached at residues Asn-16 and Asn-19. Transmembrane regions (helical) follow at residues 47–69 and 97–117; these read ASDALPLPLYLTNAVFFTLFFSV and AIIALIASFIYLLGFFGIDFV. Positions 118–171 are linker; the sequence is QSFISRASGDAWDLADTIDDDDHRLVTCSPPTPIVSVAKLPNPEPIVTESLPEE. The tract at residues 172–592 is catalytic; the sequence is DEEIVKSVID…GATTTTTTTT (421 aa). Glu-265 functions as the Charge relay system in the catalytic mechanism. Asn-329 carries an N-linked (GlcNAc...) asparagine glycan. Catalysis depends on charge relay system residues Lys-397 and Asp-473. Residue His-571 is the Proton donor of the active site. Asn-575 carries N-linked (GlcNAc...) asparagine glycosylation. Ser-577 carries the phosphoserine modification.

This sequence belongs to the HMG-CoA reductase family. Interacts (via N-terminus) with B''ALPHA and B''BETA. Post-translationally, inactivated by phosphorylation at Ser-577 by KIN10 activated form. Probably also phosphorylated at additional sites. Found in all tissues. Isoform Short is expressed at low levels specifically in flowers. Expressed in both the tapetum and microspores.

Its subcellular location is the endoplasmic reticulum membrane. It carries out the reaction (R)-mevalonate + 2 NADP(+) + CoA = (3S)-3-hydroxy-3-methylglutaryl-CoA + 2 NADPH + 2 H(+). It participates in metabolic intermediate biosynthesis; (R)-mevalonate biosynthesis; (R)-mevalonate from acetyl-CoA: step 3/3. Its activity is regulated as follows. Regulated at the post-translational level in response to alterations of sphingolipid and sterol biosynthetic pathways. Negatively regulated by a PP2A-dependent dephosphorylation occurring at a site different than Ser-577. Completely inhibited by mevinolin (IC(50) = 12.5 nM). Reversibly inactivated by phosphorylation at Ser-577 by spinach or Brassica oleracea HMGR kinases in a cell-free system. Down-regulated by KIN10 through its phosphorylation at Ser-577. Functionally, catalyzes the synthesis of mevalonate, the specific precursor of all isoprenoid compounds present in plants. This chain is 3-hydroxy-3-methylglutaryl-coenzyme A reductase 1, found in Arabidopsis thaliana (Mouse-ear cress).